The primary structure comprises 502 residues: Probable malate:quinone oxidoreductase (502 aa).

Belongs to the MQO family. The cofactor is FAD.

The enzyme catalyses (S)-malate + a quinone = a quinol + oxaloacetate. It participates in carbohydrate metabolism; tricarboxylic acid cycle; oxaloacetate from (S)-malate (quinone route): step 1/1. The sequence is that of Probable malate:quinone oxidoreductase from Parasynechococcus marenigrum (strain WH8102).